The primary structure comprises 128 residues: Sulfurtransferase TusD (128 aa).

Catalysis depends on C78, which acts as the Cysteine persulfide intermediate.

Belongs to the DsrE/TusD family. In terms of assembly, heterohexamer, formed by a dimer of trimers. The hexameric TusBCD complex contains 2 copies each of TusB, TusC and TusD. The TusBCD complex interacts with TusE.

Its subcellular location is the cytoplasm. Part of a sulfur-relay system required for 2-thiolation of 5-methylaminomethyl-2-thiouridine (mnm(5)s(2)U) at tRNA wobble positions. Accepts sulfur from TusA and transfers it in turn to TusE. In Shigella flexneri serotype 5b (strain 8401), this protein is Sulfurtransferase TusD.